We begin with the raw amino-acid sequence, 110 residues long: Non-specific lipid-transfer protein 4 (110 aa).

Positions 1–17 are cleaved as a signal peptide; sequence CVVLVMCMVVIAPMAEG. 4 disulfide bridges follow: Cys21–Cys68, Cys31–Cys45, Cys46–Cys91, and Cys66–Cys105.

It belongs to the plant LTP family.

Its function is as follows. Plant non-specific lipid-transfer proteins transfer phospholipids as well as galactolipids across membranes. May play a role in wax or cutin deposition in the cell walls of expanding epidermal cells and certain secretory tissues. The sequence is that of Non-specific lipid-transfer protein 4 from Lens culinaris (Lentil).